Here is a 626-residue protein sequence, read N- to C-terminus: Phosphomethylpyrimidine synthase (626 aa).

Basic and acidic residues predominate over residues 92–106; sequence AREVKPEDNGLKGPD. The tract at residues 92 to 117 is disordered; that stretch reads AREVKPEDNGLKGPDRSAGVPPFPNV. Substrate-binding positions include asparagine 219, methionine 248, tyrosine 277, histidine 313, 333 to 335, 374 to 377, and glutamate 413; these read SRG and DGLR. Histidine 417 is a binding site for Zn(2+). Tyrosine 440 contacts substrate. Position 481 (histidine 481) interacts with Zn(2+). Positions 561, 564, and 569 each coordinate [4Fe-4S] cluster.

Belongs to the ThiC family. As to quaternary structure, homodimer. [4Fe-4S] cluster is required as a cofactor.

The catalysed reaction is 5-amino-1-(5-phospho-beta-D-ribosyl)imidazole + S-adenosyl-L-methionine = 4-amino-2-methyl-5-(phosphooxymethyl)pyrimidine + CO + 5'-deoxyadenosine + formate + L-methionine + 3 H(+). Its pathway is cofactor biosynthesis; thiamine diphosphate biosynthesis. Catalyzes the synthesis of the hydroxymethylpyrimidine phosphate (HMP-P) moiety of thiamine from aminoimidazole ribotide (AIR) in a radical S-adenosyl-L-methionine (SAM)-dependent reaction. The chain is Phosphomethylpyrimidine synthase from Novosphingobium aromaticivorans (strain ATCC 700278 / DSM 12444 / CCUG 56034 / CIP 105152 / NBRC 16084 / F199).